Consider the following 410-residue polypeptide: Protein CNPPD1 (410 aa).

Residues 233 to 253 (CLLAVAYVSSVALAVASVAVI) form a helical membrane-spanning segment.

This sequence belongs to the CNPPD1 family.

It localises to the membrane. This Homo sapiens (Human) protein is Protein CNPPD1 (CNPPD1).